The sequence spans 823 residues: Leucine--tRNA ligase (823 aa).

A 'HIGH' region motif is present at residues 42–52; the sequence is PYPSGTLHMGH. The 'KMSKS' region motif lies at 575–579; that stretch reads KMSKS. Lys-578 serves as a coordination point for ATP.

The protein belongs to the class-I aminoacyl-tRNA synthetase family.

Its subcellular location is the cytoplasm. It carries out the reaction tRNA(Leu) + L-leucine + ATP = L-leucyl-tRNA(Leu) + AMP + diphosphate. This is Leucine--tRNA ligase from Legionella pneumophila (strain Paris).